Reading from the N-terminus, the 248-residue chain is Ras-related protein RSR1 (248 aa).

10 to 17 (GAGGVGKS) provides a ligand contact to GTP. The Effector region motif lies at 32 to 40 (YDPTIEDSY). Residues 57–61 (DTAGV) and 116–119 (NKCD) contribute to the GTP site. Residues 182 to 248 (LQKQQQQQQQ…SSGSKFCTII (67 aa)) form a disordered region. The segment covering 184 to 214 (KQQQQQQQEQDAEGQQQQQKSGKSKSSATQK) has biased composition (low complexity). Polar residues-rich tracts occupy residues 219–231 (DGQT…LKQS) and 238–248 (SSSGSKFCTII). Cys245 carries the cysteine methyl ester modification. Residue Cys245 is the site of S-geranylgeranyl cysteine attachment. Residues 246 to 248 (TII) constitute a propeptide, removed in mature form.

This sequence belongs to the small GTPase superfamily. Ras family.

It localises to the cell membrane. The catalysed reaction is GTP + H2O = GDP + phosphate + H(+). Alternates between an inactive form bound to GDP and an active form bound to GTP. Activated by a guanine nucleotide-exchange factor (GEF) and inactivated by a GTPase-activating protein (GAP). Its function is as follows. Ras-related protein which binds GDP/GTP and possesses intrinsic GTPase activity. Involved in both yeast and hypha development. In the yeast phase, it is required for normal (polar) bud site selection and is involved in cell morphogenesis; in the yeast-mycelial transition it is involved in germ tube emergence; and in the development of the hyphae it is involved in cell elongation. The protein is Ras-related protein RSR1 (RSR1) of Candida albicans (Yeast).